The primary structure comprises 492 residues: Probable cytochrome P450 310a1 (492 aa).

Residue Cys428 coordinates heme.

This sequence belongs to the cytochrome P450 family. Heme is required as a cofactor.

Its subcellular location is the endoplasmic reticulum membrane. It is found in the microsome membrane. Its function is as follows. May be involved in the metabolism of insect hormones and in the breakdown of synthetic insecticides. The sequence is that of Probable cytochrome P450 310a1 (Cyp310a1) from Drosophila melanogaster (Fruit fly).